A 95-amino-acid chain; its full sequence is MKTFKEFTSTTTPVSTITEATLTSEVIKANKGREGKPMISLVDGEEIKGTVYLGDGWSAKKDGATIVISPAEETALFKAKHISAAHLKIIAKNLL.

The propeptide occupies 1 to 19 (MKTFKEFTSTTTPVSTITE).

Functionally, internal protein I is one of four proteins in a complex that functions in bacteriophage head maturation. This Escherichia coli (Bacteriophage T4) protein is Internal protein I (ipi1).